Reading from the N-terminus, the 442-residue chain is Exodeoxyribonuclease 7 large subunit (442 aa).

Belongs to the XseA family. Heterooligomer composed of large and small subunits.

It localises to the cytoplasm. It catalyses the reaction Exonucleolytic cleavage in either 5'- to 3'- or 3'- to 5'-direction to yield nucleoside 5'-phosphates.. In terms of biological role, bidirectionally degrades single-stranded DNA into large acid-insoluble oligonucleotides, which are then degraded further into small acid-soluble oligonucleotides. The protein is Exodeoxyribonuclease 7 large subunit of Shewanella sediminis (strain HAW-EB3).